The following is an 833-amino-acid chain: Leucine--tRNA ligase (833 aa).

The 'HIGH' region signature appears at 41-52 (PYPSGAGLHVGH). A 'KMSKS' region motif is present at residues 610–614 (KMSKS). An ATP-binding site is contributed by Lys-613.

Belongs to the class-I aminoacyl-tRNA synthetase family.

It localises to the cytoplasm. It catalyses the reaction tRNA(Leu) + L-leucine + ATP = L-leucyl-tRNA(Leu) + AMP + diphosphate. This Streptococcus thermophilus (strain CNRZ 1066) protein is Leucine--tRNA ligase.